The sequence spans 166 residues: Peptide methionine sulfoxide reductase MsrA (166 aa).

The active site involves C11.

It belongs to the MsrA Met sulfoxide reductase family.

The catalysed reaction is L-methionyl-[protein] + [thioredoxin]-disulfide + H2O = L-methionyl-(S)-S-oxide-[protein] + [thioredoxin]-dithiol. It catalyses the reaction [thioredoxin]-disulfide + L-methionine + H2O = L-methionine (S)-S-oxide + [thioredoxin]-dithiol. Its function is as follows. Has an important function as a repair enzyme for proteins that have been inactivated by oxidation. Catalyzes the reversible oxidation-reduction of methionine sulfoxide in proteins to methionine. The protein is Peptide methionine sulfoxide reductase MsrA of Mycoplasmopsis pulmonis (strain UAB CTIP) (Mycoplasma pulmonis).